A 226-amino-acid polypeptide reads, in one-letter code: Putative N-acetylmannosamine-6-phosphate 2-epimerase (226 aa).

It belongs to the NanE family.

It carries out the reaction an N-acyl-D-glucosamine 6-phosphate = an N-acyl-D-mannosamine 6-phosphate. It participates in amino-sugar metabolism; N-acetylneuraminate degradation; D-fructose 6-phosphate from N-acetylneuraminate: step 3/5. In terms of biological role, converts N-acetylmannosamine-6-phosphate (ManNAc-6-P) to N-acetylglucosamine-6-phosphate (GlcNAc-6-P). This Mycoplasma capricolum subsp. capricolum (strain California kid / ATCC 27343 / NCTC 10154) protein is Putative N-acetylmannosamine-6-phosphate 2-epimerase.